The primary structure comprises 281 residues: 3-mercaptopyruvate sulfurtransferase (281 aa).

2 consecutive Rhodanese domains span residues 17–135 (DDPE…LLEE) and 165–278 (HENT…LPVE). Arginine 179 is a substrate binding site. Cysteine 238 serves as the catalytic Cysteine persulfide intermediate. The substrate specificity stretch occupies residues 238 to 244 (CGSGVTA).

It is found in the cytoplasm. It catalyses the reaction 2-oxo-3-sulfanylpropanoate + [thioredoxin]-dithiol = [thioredoxin]-disulfide + hydrogen sulfide + pyruvate + H(+). Catalyzes the transfer of sulfur from 3-mercaptopyruvate to a thiol-containing acceptor to form an intramolecular disulfide releasing hydrogen sulfide and pyruvate. The polypeptide is 3-mercaptopyruvate sulfurtransferase (sseA) (Escherichia coli O157:H7).